The primary structure comprises 540 residues: Protein SOSEKI 3 (540 aa).

Positions 32-123 (KKVQIVYYLS…YVLKGSELFD (92 aa)) are DIX-like oligomerization domain. Disordered regions lie at residues 147 to 201 (EPPS…DAKN) and 219 to 294 (ADAS…SSLG). Low complexity-rich tracts occupy residues 150–163 (SSRS…SSSM) and 185–194 (RSVSSSGVSP). Positions 221–244 (ASTQTDETVSGRSKTPIETFSRGV) are enriched in polar residues. A compositionally biased stretch (acidic residues) spans 246–256 (TDEDVSSEPET). Over residues 280 to 292 (NSVSPPFSNSASS) the composition is skewed to low complexity. Positions 342–343 (CG) match the Association to cell membranes motif. A disordered region spans residues 412-492 (KKDAADSNAS…KNIPCTTKTH (81 aa)). Residues 418-437 (SNASLKRSSSYNGDRASNQM) are compositionally biased toward polar residues. Over residues 471-482 (SEKRRDSSEDTT) the composition is skewed to basic and acidic residues.

Belongs to the SOSEKI family. Homodimer. Forms long polymer filaments with other SOKs proteins polymers (e.g. SOK1, SOK2, SOK3 and SOK4) crucial for polar localization and biological activity. Binds to ANGUSTIFOLIA (AN). As to expression, expressed during embryogenesis and in roots.

The protein localises to the cell membrane. Its function is as follows. SOSEKI proteins (SOK1-5) locally interpret global polarity cues and can influence cell division orientation to coordinate cell polarization relative to body axes, probably by guiding ANGUSTIFOLIA (AN) polarized localization. The sequence is that of Protein SOSEKI 3 from Arabidopsis thaliana (Mouse-ear cress).